Reading from the N-terminus, the 344-residue chain is Late embryogenesis abundant protein 17 (344 aa).

Disordered stretches follow at residues 1–20 (MASR…RRAA) and 116–258 (KDYT…QGQG). Residues 3–52 (SRQDRREARAEADARRAAEEIARARDERVMQAEVDARSAADEIARARADR) are a coiled coil. Composition is skewed to basic and acidic residues over residues 116–163 (KDYT…KDAV), 172–230 (EATK…DATK), and 238–252 (DKAR…DATD).

Belongs to the LEA type 4 family. As to expression, expressed in embryos.

The protein resides in the nucleus. Functionally, involved in abiotic stress responses. May function as chaperone and contribute to prevent the formation of damaging protein aggregates. The chain is Late embryogenesis abundant protein 17 from Oryza sativa subsp. japonica (Rice).